Consider the following 287-residue polypeptide: 4-diphosphocytidyl-2-C-methyl-D-erythritol kinase (287 aa).

Lys12 is a catalytic residue. ATP is bound at residue 95 to 105 (PAQAGMGGGSS). Residue Asp137 is part of the active site.

Belongs to the GHMP kinase family. IspE subfamily.

The enzyme catalyses 4-CDP-2-C-methyl-D-erythritol + ATP = 4-CDP-2-C-methyl-D-erythritol 2-phosphate + ADP + H(+). It participates in isoprenoid biosynthesis; isopentenyl diphosphate biosynthesis via DXP pathway; isopentenyl diphosphate from 1-deoxy-D-xylulose 5-phosphate: step 3/6. Its function is as follows. Catalyzes the phosphorylation of the position 2 hydroxy group of 4-diphosphocytidyl-2C-methyl-D-erythritol. The sequence is that of 4-diphosphocytidyl-2-C-methyl-D-erythritol kinase from Delftia acidovorans (strain DSM 14801 / SPH-1).